The following is a 364-amino-acid chain: Probable UDP-arabinopyranose mutase 1 (364 aa).

A DXD motif motif is present at residues 103 to 105; that stretch reads DDD. N-linked (Glc...) arginine glycosylation occurs at Arg-151.

It belongs to the RGP family. As to quaternary structure, homopentamer or homohexamer. Mn(2+) serves as cofactor. The cofactor is Mg(2+). In terms of processing, reversibly glycosylated by UDP-glucose, UDP-xylose and UDP-galactose, but not UDP-mannose.

It is found in the secreted. It localises to the cell wall. The protein localises to the cell junction. Its subcellular location is the plasmodesma. The protein resides in the golgi apparatus. The enzyme catalyses UDP-beta-L-arabinofuranose = UDP-beta-L-arabinopyranose. With respect to regulation, inhibited by inhibitor protein (IP) which may be a form of sucrose synthase. Its function is as follows. Probable UDP-L-arabinose mutase involved in the biosynthesis of cell wall non-cellulosic polysaccharides. Was initially shown to possess an autoglycosylating activity which is dependent on the presence of UDP-glucose and manganese. This is Probable UDP-arabinopyranose mutase 1 from Pisum sativum (Garden pea).